The sequence spans 114 residues: KKLGKKGLTPSKIGIILRDSHGVAQVRFVNGNKILRIMKSVGLKPDIPEDLYHMIKKAVAIRKHLERNRKDKDGKFRLILVESRIHRLARYYKTKSVLPPNWKYESSTASALVA.

Belongs to the universal ribosomal protein uS15 family.

This Musca domestica (House fly) protein is Small ribosomal subunit protein uS15 (RpS13).